The following is a 138-amino-acid chain: Small ribosomal subunit protein uS11c (138 aa).

The tract at residues 1 to 22 is disordered; it reads MAKSIPKTGSRKNVRIGSRNQT.

It belongs to the universal ribosomal protein uS11 family. As to quaternary structure, part of the 30S ribosomal subunit.

The protein localises to the plastid. It localises to the chloroplast. The sequence is that of Small ribosomal subunit protein uS11c from Phaseolus angularis (Azuki bean).